Consider the following 280-residue polypeptide: Bifunctional protein FolD (280 aa).

NADP(+) contacts are provided by residues 166-168 and serine 191; that span reads GRS.

The protein belongs to the tetrahydrofolate dehydrogenase/cyclohydrolase family. As to quaternary structure, homodimer.

The catalysed reaction is (6R)-5,10-methylene-5,6,7,8-tetrahydrofolate + NADP(+) = (6R)-5,10-methenyltetrahydrofolate + NADPH. It catalyses the reaction (6R)-5,10-methenyltetrahydrofolate + H2O = (6R)-10-formyltetrahydrofolate + H(+). It functions in the pathway one-carbon metabolism; tetrahydrofolate interconversion. Catalyzes the oxidation of 5,10-methylenetetrahydrofolate to 5,10-methenyltetrahydrofolate and then the hydrolysis of 5,10-methenyltetrahydrofolate to 10-formyltetrahydrofolate. In Marinomonas sp. (strain MWYL1), this protein is Bifunctional protein FolD.